The primary structure comprises 62 residues: Large ribosomal subunit protein bL28 (62 aa).

A disordered region spans residues 1 to 22 (MGKQCFVTGRKASTGNRRSHAL).

The protein belongs to the bacterial ribosomal protein bL28 family.

The protein is Large ribosomal subunit protein bL28 of Staphylococcus aureus (strain N315).